A 150-amino-acid chain; its full sequence is Ribosomal RNA large subunit methyltransferase H (150 aa).

S-adenosyl-L-methionine-binding positions include L68, G97, and 116–121; that span reads LSAMTL.

It belongs to the RNA methyltransferase RlmH family. Homodimer.

The protein localises to the cytoplasm. It catalyses the reaction pseudouridine(1915) in 23S rRNA + S-adenosyl-L-methionine = N(3)-methylpseudouridine(1915) in 23S rRNA + S-adenosyl-L-homocysteine + H(+). In terms of biological role, specifically methylates the pseudouridine at position 1915 (m3Psi1915) in 23S rRNA. The polypeptide is Ribosomal RNA large subunit methyltransferase H (Prochlorococcus marinus (strain MIT 9303)).